Consider the following 135-residue polypeptide: Transcription antitermination protein NusB (135 aa).

Belongs to the NusB family.

Its function is as follows. Involved in transcription antitermination. Required for transcription of ribosomal RNA (rRNA) genes. Binds specifically to the boxA antiterminator sequence of the ribosomal RNA (rrn) operons. In Lacticaseibacillus casei (strain BL23) (Lactobacillus casei), this protein is Transcription antitermination protein NusB.